The sequence spans 79 residues: MENIEQRVKKIVAEQLGVNEAEVKNESSFVDDLGADSLDTVELVMALEEEFECEIPDEEAEKITTVQQAIDYVTAHLDK.

A Carrier domain is found at 2–77; the sequence is ENIEQRVKKI…QAIDYVTAHL (76 aa). O-(pantetheine 4'-phosphoryl)serine is present on S37.

Belongs to the acyl carrier protein (ACP) family. 4'-phosphopantetheine is transferred from CoA to a specific serine of apo-ACP by AcpS. This modification is essential for activity because fatty acids are bound in thioester linkage to the sulfhydryl of the prosthetic group.

It is found in the cytoplasm. It functions in the pathway lipid metabolism; fatty acid biosynthesis. In terms of biological role, carrier of the growing fatty acid chain in fatty acid biosynthesis. This Laribacter hongkongensis (strain HLHK9) protein is Acyl carrier protein.